A 229-amino-acid chain; its full sequence is uncharacterized protein (229 aa).

Residues 2–229 (LTLNNISKSY…LDERGDISHA (228 aa)) form the ABC transporter domain. 38–45 (GPSGSGKS) contributes to the ATP binding site.

The protein belongs to the ABC transporter superfamily.

This is an uncharacterized protein from Bacillus subtilis (strain 168).